Reading from the N-terminus, the 328-residue chain is Reticulocalbin-3 (328 aa).

Residues 1–20 (MMWRWTLMLLLLLLRHWALG) form the signal peptide. Positions 24–48 (PDAGPHGQDRVHHGTPLSEAPHDDA) are disordered. 6 EF-hand domains span residues 75–112 (ESQA…TQQR), 113–148 (HIRD…HYEP), 163–198 (KMLA…EEFP), 200–235 (MRDI…AEPG), 241–276 (WVQT…PSQD), and 277–312 (QPLV…FVGS). Ca(2+)-binding residues include aspartate 92, aspartate 94, tryptophan 96, glutamate 101, aspartate 126, aspartate 128, aspartate 130, arginine 132, and glutamate 137. Residue asparagine 140 is glycosylated (N-linked (GlcNAc...) asparagine). Ca(2+) contacts are provided by aspartate 176, aspartate 178, aspartate 180, methionine 182, glutamate 187, aspartate 213, asparagine 215, aspartate 217, tyrosine 219, glutamate 224, aspartate 254, asparagine 256, aspartate 258, arginine 260, glutamate 265, aspartate 290, aspartate 292, aspartate 294, arginine 296, and glutamate 301. Residues 325 to 328 (HDEL) carry the Prevents secretion from ER motif.

It belongs to the CREC family. Interacts with PCSK6 (immature form including the propeptide); probably involved in the maturation and the secretion of PCSK6. Post-translationally, N-glycosylated. Degraded by PCSK6 and other endoproteases including FURIN and PCSK5.

Its subcellular location is the endoplasmic reticulum lumen. In terms of biological role, probable molecular chaperone assisting protein biosynthesis and transport in the endoplasmic reticulum. Required for the proper biosynthesis and transport of pulmonary surfactant-associated protein A/SP-A, pulmonary surfactant-associated protein D/SP-D and the lipid transporter ABCA3. By regulating both the proper expression and the degradation through the endoplasmic reticulum-associated protein degradation pathway of these proteins plays a crucial role in pulmonary surfactant homeostasis. Has an anti-fibrotic activity by negatively regulating the secretion of type I and type III collagens. This calcium-binding protein also transiently associates with immature PCSK6 and regulates its secretion. This is Reticulocalbin-3 from Rattus norvegicus (Rat).